Reading from the N-terminus, the 33-residue chain is Translocation protein SEC63 homolog (33 aa).

As to quaternary structure, the ER translocon complex consists of channel-forming core components SEC61A1, SEC61B and SEC61G and different auxiliary components such as SEC62 and SEC63. As to expression, pancreas.

It is found in the endoplasmic reticulum membrane. In terms of biological role, mediates cotranslational and post-translational transport of certain precursor polypeptides across endoplasmic reticulum (ER). Proposed to play an auxiliary role in recognition of precursors with short and apolar signal peptides. May cooperate with SEC62 and HSPA5/BiP to facilitate targeting of small presecretory proteins into the SEC61 channel-forming translocon complex, triggering channel opening for polypeptide translocation to the ER lumen. Required for efficient PKD1/Polycystin-1 biogenesis and trafficking to the plasma membrane of the primary cilia. In Canis lupus familiaris (Dog), this protein is Translocation protein SEC63 homolog (SEC63).